A 232-amino-acid chain; its full sequence is Small ribosomal subunit protein uS3 (232 aa).

The region spanning Val39–Arg107 is the KH type-2 domain.

It belongs to the universal ribosomal protein uS3 family. In terms of assembly, part of the 30S ribosomal subunit. Forms a tight complex with proteins S10 and S14.

Functionally, binds the lower part of the 30S subunit head. Binds mRNA in the 70S ribosome, positioning it for translation. The protein is Small ribosomal subunit protein uS3 of Yersinia pseudotuberculosis serotype O:1b (strain IP 31758).